Reading from the N-terminus, the 503-residue chain is MVLEMLNPMHYNITSMVPEAMPAATMPILLLTGLFLLVWNYEGTSSIPGPGYCMGIGPLISHGRFLWMGIGNACNYYNRMYGEFMRVWISGEETLIISKSSSMFHVMKHNHYSSRFGSKLGLQCIGMHEKGIIFNNNPDLWKTTRPLFMKALSGPGLVRMVTVCAESLNTHLDRLEEVTNESGFIDVLTLLRCVMLDTSNTLFLRIPLDENAIVFKIQGYFDAWQALLIKPDIFFKISWLYKKYEKSVKDLKDAIEVLMAEKRRRISAEEKLEEHIDFATELILAEKRGDLTRENVNQCMLEMLIAAPDTMSVSLFFMLFLIAKHPNVEEAIMKEIQTVVGERDVKIDDIQKLKVVENFIYESMRYQPVVDLVMRKALEDDVIDGYPVKKGTNIILNIGRMHRLEFFPKPNEFTLENFAKNVPYRYFQPFGFGPRSCAGKYIAMVMMKSILVTLLRRFHVKTLGGECVESLQKTNDLALHPDHTKSMLEMIFTPRNSGWCLEH.

Substrate-binding residues include D309 and M374. C437 serves as a coordination point for heme.

This sequence belongs to the cytochrome P450 family. It depends on heme as a cofactor.

Its subcellular location is the membrane. It catalyses the reaction testosterone + 3 reduced [NADPH--hemoprotein reductase] + 3 O2 = 17beta-estradiol + formate + 3 oxidized [NADPH--hemoprotein reductase] + 4 H2O + 4 H(+). The enzyme catalyses androst-4-ene-3,17-dione + 3 reduced [NADPH--hemoprotein reductase] + 3 O2 = estrone + formate + 3 oxidized [NADPH--hemoprotein reductase] + 4 H2O + 4 H(+). Its function is as follows. Catalyzes the formation of aromatic C18 estrogens from C19 androgens. The polypeptide is Aromatase (CYP19A1) (Callithrix jacchus (White-tufted-ear marmoset)).